We begin with the raw amino-acid sequence, 579 residues long: Trehalase (579 aa).

An N-terminal signal peptide occupies residues M1–A15. N-linked (GlcNAc...) asparagine glycosylation is found at N29 and N58. Residues R161, W168–D169, N205, R214–Q216, R279–E281, and G313 each bind substrate. N205 carries N-linked (GlcNAc...) asparagine glycosylation. D315 functions as the Proton donor/acceptor in the catalytic mechanism. The N-linked (GlcNAc...) asparagine glycan is linked to N331. The active-site Proton donor/acceptor is E513. Position 528 (E528) interacts with substrate. Residues D560–N569 are compositionally biased toward polar residues. The segment at D560–K579 is disordered.

The protein belongs to the glycosyl hydrolase 37 family. In terms of tissue distribution, in midgut and Malpighian tubules.

The protein resides in the basolateral cell membrane. The enzyme catalyses alpha,alpha-trehalose + H2O = alpha-D-glucose + beta-D-glucose. Involved in uptake of hemolymph trehalose into epithelial cells in the midgut of feeding larvae. The sequence is that of Trehalase from Bombyx mori (Silk moth).